Here is a 197-residue protein sequence, read N- to C-terminus: Auxin-responsive protein IAA31 (197 aa).

2 disordered regions span residues 1–43 (MENL…DQAK) and 66–90 (SCLQ…ETQQ). The EAR-like (transcriptional repression) signature appears at 9-13 (LRLGL). Residues 99–186 (GLFVKVSMDG…TCKRLRIMKG (88 aa)) form the PB1 domain.

The protein belongs to the Aux/IAA family. Homodimers and heterodimers. As to expression, highly expressed in etiolated seedlings. Expressed in roots.

It is found in the nucleus. Aux/IAA proteins are short-lived transcriptional factors that function as repressors of early auxin response genes at low auxin concentrations. This chain is Auxin-responsive protein IAA31 (IAA31), found in Oryza sativa subsp. japonica (Rice).